The following is a 437-amino-acid chain: Serine hydroxymethyltransferase 1 (437 aa).

(6S)-5,6,7,8-tetrahydrofolate contacts are provided by residues Leu-132 and 136 to 138 (GHL). Lys-241 carries the N6-(pyridoxal phosphate)lysine modification.

This sequence belongs to the SHMT family. In terms of assembly, homodimer. It depends on pyridoxal 5'-phosphate as a cofactor.

The protein resides in the cytoplasm. It catalyses the reaction (6R)-5,10-methylene-5,6,7,8-tetrahydrofolate + glycine + H2O = (6S)-5,6,7,8-tetrahydrofolate + L-serine. It functions in the pathway one-carbon metabolism; tetrahydrofolate interconversion. Its pathway is amino-acid biosynthesis; glycine biosynthesis; glycine from L-serine: step 1/1. Functionally, catalyzes the reversible interconversion of serine and glycine with tetrahydrofolate (THF) serving as the one-carbon carrier. This reaction serves as the major source of one-carbon groups required for the biosynthesis of purines, thymidylate, methionine, and other important biomolecules. Also exhibits THF-independent aldolase activity toward beta-hydroxyamino acids, producing glycine and aldehydes, via a retro-aldol mechanism. This Mesorhizobium japonicum (strain LMG 29417 / CECT 9101 / MAFF 303099) (Mesorhizobium loti (strain MAFF 303099)) protein is Serine hydroxymethyltransferase 1.